The following is a 239-amino-acid chain: uncharacterized protein (239 aa).

This is an uncharacterized protein from Methanocaldococcus jannaschii (strain ATCC 43067 / DSM 2661 / JAL-1 / JCM 10045 / NBRC 100440) (Methanococcus jannaschii).